The chain runs to 394 residues: Endothelial cell-selective adhesion molecule (394 aa).

Positions 1–29 (MILPARTPETSLLRVLFLGLSTLAAFSLA) are cleaved as a signal peptide. Residues 30-251 (QMELHVPPGL…LDVMTGSKAA (222 aa)) lie on the Extracellular side of the membrane. The Ig-like V-type domain maps to 37–146 (PGLNKLEAVE…DGKNIGHSIK (110 aa)). Residues Asn-111, Asn-172, Asn-216, and Asn-239 are each glycosylated (N-linked (GlcNAc...) asparagine). Positions 156–243 (PAPPSCSFQG…GFAQCNVTLD (88 aa)) constitute an Ig-like C2-type domain. Cys-177 and Cys-227 are oxidised to a cystine. The helical transmembrane segment at 252–272 (VVAGAVVGTFVGLVLIAGLVL) threads the bilayer. The Cytoplasmic portion of the chain corresponds to 273–394 (LYQRRSKTLE…PAQSQAGSLV (122 aa)). Positions 300–372 (WTKGSDTISK…SLTPGGVSSS (73 aa)) are disordered. 2 stretches are compositionally biased toward polar residues: residues 303 to 318 (GSDTISKNGTLSSVTS) and 335 to 347 (FTPTPSVSSQALS). Phosphoserine is present on Ser-304. Thr-336 and Thr-338 each carry phosphothreonine. Residues Ser-340, Ser-343, and Ser-348 each carry the phosphoserine modification.

Interacts with MAGI1.

Its subcellular location is the cell junction. The protein localises to the adherens junction. It is found in the tight junction. It localises to the cell membrane. Its function is as follows. Can mediate aggregation most likely through a homophilic molecular interaction. The sequence is that of Endothelial cell-selective adhesion molecule (Esam) from Rattus norvegicus (Rat).